The chain runs to 159 residues: RNA pyrophosphohydrolase (159 aa).

Residues 6 to 149 (GFRPNVGIIL…KREVYRRALK (144 aa)) enclose the Nudix hydrolase domain. The Nudix box signature appears at 38-59 (GGINPDETPEDALYRELNEEVG).

Belongs to the Nudix hydrolase family. RppH subfamily. A divalent metal cation is required as a cofactor.

Functionally, accelerates the degradation of transcripts by removing pyrophosphate from the 5'-end of triphosphorylated RNA, leading to a more labile monophosphorylated state that can stimulate subsequent ribonuclease cleavage. In Pseudomonas entomophila (strain L48), this protein is RNA pyrophosphohydrolase.